Consider the following 660-residue polypeptide: Bifunctional polymyxin resistance protein ArnA (660 aa).

The segment at 1 to 304 (MKAVVFAYHD…TLGLVEGSRL (304 aa)) is formyltransferase ArnAFT. H104 serves as the catalytic Proton donor; for formyltransferase activity. (6R)-10-formyltetrahydrofolate is bound by residues R114 and 136-140 (VAKAD). Residues 314 to 660 (RRTRVLILGV…RTVDIVEKSS (347 aa)) form a dehydrogenase ArnADH region. Residues D347 and 368–369 (DI) contribute to the NAD(+) site. Residues A393, Y398, and 432-433 (TS) each bind UDP-alpha-D-glucuronate. The Proton acceptor; for decarboxylase activity role is filled by E434. UDP-alpha-D-glucuronate is bound by residues R460, N492, 526-535 (KLIDGGKQKR), and Y613. R619 serves as the catalytic Proton donor; for decarboxylase activity.

It in the N-terminal section; belongs to the Fmt family. UDP-L-Ara4N formyltransferase subfamily. In the C-terminal section; belongs to the NAD(P)-dependent epimerase/dehydratase family. UDP-glucuronic acid decarboxylase subfamily. As to quaternary structure, homohexamer, formed by a dimer of trimers.

The enzyme catalyses UDP-alpha-D-glucuronate + NAD(+) = UDP-beta-L-threo-pentopyranos-4-ulose + CO2 + NADH. It catalyses the reaction UDP-4-amino-4-deoxy-beta-L-arabinose + (6R)-10-formyltetrahydrofolate = UDP-4-deoxy-4-formamido-beta-L-arabinose + (6S)-5,6,7,8-tetrahydrofolate + H(+). Its pathway is nucleotide-sugar biosynthesis; UDP-4-deoxy-4-formamido-beta-L-arabinose biosynthesis; UDP-4-deoxy-4-formamido-beta-L-arabinose from UDP-alpha-D-glucuronate: step 1/3. It participates in nucleotide-sugar biosynthesis; UDP-4-deoxy-4-formamido-beta-L-arabinose biosynthesis; UDP-4-deoxy-4-formamido-beta-L-arabinose from UDP-alpha-D-glucuronate: step 3/3. It functions in the pathway bacterial outer membrane biogenesis; lipopolysaccharide biosynthesis. In terms of biological role, bifunctional enzyme that catalyzes the oxidative decarboxylation of UDP-glucuronic acid (UDP-GlcUA) to UDP-4-keto-arabinose (UDP-Ara4O) and the addition of a formyl group to UDP-4-amino-4-deoxy-L-arabinose (UDP-L-Ara4N) to form UDP-L-4-formamido-arabinose (UDP-L-Ara4FN). The modified arabinose is attached to lipid A and is required for resistance to polymyxin and cationic antimicrobial peptides. The sequence is that of Bifunctional polymyxin resistance protein ArnA from Escherichia fergusonii (strain ATCC 35469 / DSM 13698 / CCUG 18766 / IAM 14443 / JCM 21226 / LMG 7866 / NBRC 102419 / NCTC 12128 / CDC 0568-73).